A 911-amino-acid polypeptide reads, in one-letter code: Protein translocase subunit SecA (911 aa).

ATP is bound by residues Gln-87, 105–109 (GEGKT), and Asp-513. A disordered region spans residues 853-911 (IQLQHEQVSGLEPEAGEAPSAGEPRSEQPYVRAGRKVGRNDPCPCGSGKKFKACHGKLG). Positions 862–875 (GLEPEAGEAPSAGE) are enriched in low complexity. Residues Cys-895, Cys-897, Cys-906, and His-907 each coordinate Zn(2+). A compositionally biased stretch (basic residues) spans 901-911 (KKFKACHGKLG).

It belongs to the SecA family. In terms of assembly, monomer and homodimer. Part of the essential Sec protein translocation apparatus which comprises SecA, SecYEG and auxiliary proteins SecDF-YajC and YidC. It depends on Zn(2+) as a cofactor.

The protein localises to the cell inner membrane. Its subcellular location is the cytoplasm. It carries out the reaction ATP + H2O + cellular proteinSide 1 = ADP + phosphate + cellular proteinSide 2.. Functionally, part of the Sec protein translocase complex. Interacts with the SecYEG preprotein conducting channel. Has a central role in coupling the hydrolysis of ATP to the transfer of proteins into and across the cell membrane, serving both as a receptor for the preprotein-SecB complex and as an ATP-driven molecular motor driving the stepwise translocation of polypeptide chains across the membrane. This Teredinibacter turnerae (strain ATCC 39867 / T7901) protein is Protein translocase subunit SecA.